Reading from the N-terminus, the 71-residue chain is Exodeoxyribonuclease 7 small subunit (71 aa).

The protein belongs to the XseB family. Heterooligomer composed of large and small subunits.

The protein localises to the cytoplasm. The catalysed reaction is Exonucleolytic cleavage in either 5'- to 3'- or 3'- to 5'-direction to yield nucleoside 5'-phosphates.. Its function is as follows. Bidirectionally degrades single-stranded DNA into large acid-insoluble oligonucleotides, which are then degraded further into small acid-soluble oligonucleotides. In Streptococcus agalactiae serotype Ia (strain ATCC 27591 / A909 / CDC SS700), this protein is Exodeoxyribonuclease 7 small subunit.